A 280-amino-acid chain; its full sequence is Small ribosomal subunit protein uS2 (280 aa).

Belongs to the universal ribosomal protein uS2 family.

The polypeptide is Small ribosomal subunit protein uS2 (Desulforapulum autotrophicum (strain ATCC 43914 / DSM 3382 / VKM B-1955 / HRM2) (Desulfobacterium autotrophicum)).